The primary structure comprises 866 residues: Protein aubergine (866 aa).

An N-acetylmethionine modification is found at Met-1. The tract at residues Met-1–Ser-61 is disordered. Symmetric dimethylarginine occurs at positions 11, 13, 15, and 17. Gly residues predominate over residues Ala-46–Ala-56. Positions Thr-281–Gly-390 constitute a PAZ domain. Positions Ile-555 to Asn-852 constitute a Piwi domain.

The protein belongs to the argonaute family. Piwi subfamily. In terms of assembly, component of the ping-pong piRNA processing (4P) complex consisting of krimp, aub and AGO3. Interacts (via N-terminus when symmetrically dimethylated on arginine residues) with krimp (via tudor domain); this interaction requires methylation of at least one N-terminal arginie residue. Interacts with vas and AGO3. May form part of a piRNA processing complex consisting of tud, aub and AGO3. Interacts (when symmetrically dimethylated on arginine residues) with tud; methylation and/or interaction requires association with piRNA. Interacts (via N-terminus and when associated with piRNA) with csul/PRMT5; the interaction recruits the PRMT5 methylosome complex to modify N-terminal arginines by symmetrical dimethylation but involves residues other than the arginines to be modified. Forms a complex with smg, twin, AGO3, nanos mRNA and piRNAs that targets the nanos 3'-untranslated region, in early embryos. Interacts with nanos mRNA and rump (in an RNA-dependent manner). Interacts with papi and vret. Interacts with me31B. In terms of processing, symmetrical dimethylation of arginines (sDMA) on Arg-11, Arg-13 and/or Arg-15 by csul/PRMT5/DART5, is required for binding to tud, localization to the pole plasm and association with the correct piRNAs. SDMA on Arg-11, Arg-13, Arg-15 and/or Arg-17 is required for binding to krimp and stable recruitment to subregions of the nuage. Methylation state does not affect protein stability. SDMA plays an important role in ping-pong amplification of piRNAs and is essential for function in vivo. Methylation state functions as an indicator of its piRNA binding state. PiRNA binding promotes sDMA modification; piRNA binding induces a conformational change that exposes the N-terminal arginines, making them available to the methylosome complex. In terms of tissue distribution, expressed in ovary. In the germarium, found in germline stem and cyst cells. In egg chambers from stage 6, expressed both in nurse cells and oocytes. In embryos, accumulates in the pole cells, although low expression is detected throughout the entire embryo. In testis, expressed in germline stem cells, gonialblast and spermatogonia cells (at protein level). In the adult brain, expressed in the ellipsoid body, the mushroom body subdivision in the peduncle and the cell body layer. Expressed specifically in alpha'/beta' and gamma neurons.

It is found in the cytoplasm. It localises to the cytosol. Its subcellular location is the perinuclear region. The protein localises to the cytoplasmic ribonucleoprotein granule. Component of the perinuclear meiotic nuage, a germline-specific subcellular membraneless ribonucleoprotein compartment involved in production of transposable element-repressing Piwi-interacting RNA (piRNA)-induced silencing complexes (piRISCs), which are essential for maintaining germline integrity during oogenesis; essential for the formation and/or structural integrity of nuage particles. Acts via the Piwi-interacting RNA (piRNA) metabolic process, which mediates the repression of transposable elements during meiosis by forming complexes composed of piRNAs and Piwi proteins and governs the methylation and subsequent repression of transposons. Directly binds piRNAs, a class of 24 to 30 nucleotide RNAs that are generated by a Dicer-independent mechanism and are primarily derived from transposons and other repeated sequence elements. Shows RNA cleavage or slicer activity; including aub-piRNA complexes from ovary and testis. When loaded with guide piRNAs recognizes and cleaves complementary RNAs to repress their expression and produce complementary piRNAs. Together with Piwi protein AGO3 recruited to subregions of the perinuclear nuage by krimp, which coordinates their activity in the ping-pong amplification step of secondary piRNA biogenesis. Krimp recruits piRNA bound aub and unbound AGO3, bringing them into close proximity to facilitate the loading onto AGO3 of freshly cut piRNAs generated by aub cleavage of target sequences; krimp recognizes the piRNA loading state of the Piwi proteins via symmetrically dimethylated arginine modification in their N-terminus. Important for asymmetric ping-pong amplification to bias production towards antisense piRNAs capable of silencing transposable elements. Required for the localization of mael and krimp to the meiotic nuage. In ovary, associates predominantly with antisense piRNAs that contain uridine at their 5' end. In testis, associates with Su(Ste) antisense piRNAs (most abundant class of piRNAs found in complex with aub in testes) and negatively regulates Ste expression, most likely by cleaving its transcripts. Also in testis, may repress translation of vas when associated with a piRNA derived from chromosome X, termed AT-chX-1, whose sequence shows strong complementarity to vas mRNA. Involved in repression of long interspersed nuclear elements (LINEs) including HeT-A, I-element and TART LINEs. Repression of specialized telomeric retroelements HeT-A and TART is involved in telomere regulation; Drosophila telomeres being maintained by transposition of specialized telomeric retroelements. Also involved in telomeric trans-silencing, a repression mechanism by which a transposon or a transgene inserted in subtelomeric heterochromatin has the capacity to repress in trans, in the female germline, a homologous transposon, or transgene located in euchromatin. Involved in the suppression of meiotic drive of sex chromosomes and autosomes. Involved in transposon silencing in the adult brain. Required for dorsal-ventral as well as anterior-posterior patterning of the egg. Required during oogenesis for primordial germ cell formation and activation of RNA interference. During early oogenesis, required for osk mRNA silencing and polarization of the microtubule cytoskeleton. During mid-oogenesis, required for osk mRNA localization to the posterior pole and efficient translation of osk and grk. During embryogenesis, required for posterior localization of nanos (nos) mRNA, independently of osk, and pole cell formation. Forms a complex with smg, twin, AGO3 and specific piRNAs that targets nanos mRNA (and probably other maternal mRNAS) for deadenylation promoting its decay during early embryogenesis. In Drosophila melanogaster (Fruit fly), this protein is Protein aubergine.